Here is a 186-residue protein sequence, read N- to C-terminus: Single-stranded DNA-binding protein 1 (186 aa).

The SSB domain occupies 1-108; that stretch reads MDATVTVVGN…LEIDEIGPTL (108 aa). A disordered region spans residues 119-186; the sequence is TQAGHGVSPD…EDFDSDEVPF (68 aa). Residues 175–186 show a composition bias toward acidic residues; it reads SYEDFDSDEVPF.

As to quaternary structure, homotetramer.

The chain is Single-stranded DNA-binding protein 1 (ssb1) from Tropheryma whipplei (strain Twist) (Whipple's bacillus).